We begin with the raw amino-acid sequence, 195 residues long: Lipid A acyltransferase PagP (195 aa).

The first 30 residues, 1–30 (MRLTLTSRSRLFVLSSLLFISTFDVLSAQA), serve as a signal peptide directing secretion. Residues histidine 67, aspartate 110, and serine 111 contribute to the active site.

It belongs to the lipid A palmitoyltransferase family. In terms of assembly, homodimer.

The protein localises to the cell outer membrane. The enzyme catalyses a lipid A + a 1,2-diacyl-sn-glycero-3-phosphocholine = a hepta-acyl lipid A + a 2-acyl-sn-glycero-3-phosphocholine. It carries out the reaction a lipid IVA + a 1,2-diacyl-sn-glycero-3-phosphocholine = a lipid IVB + a 2-acyl-sn-glycero-3-phosphocholine. The catalysed reaction is a lipid IIA + a 1,2-diacyl-sn-glycero-3-phosphocholine = a lipid IIB + a 2-acyl-sn-glycero-3-phosphocholine. Functionally, transfers a fatty acid residue from the sn-1 position of a phospholipid to the N-linked hydroxyfatty acid chain on the proximal unit of lipid A or its precursors. This is Lipid A acyltransferase PagP from Dickeya chrysanthemi (strain Ech1591) (Dickeya zeae (strain Ech1591)).